A 186-amino-acid chain; its full sequence is Elongation factor P (186 aa).

It belongs to the elongation factor P family.

It localises to the cytoplasm. It participates in protein biosynthesis; polypeptide chain elongation. Its function is as follows. Involved in peptide bond synthesis. Stimulates efficient translation and peptide-bond synthesis on native or reconstituted 70S ribosomes in vitro. Probably functions indirectly by altering the affinity of the ribosome for aminoacyl-tRNA, thus increasing their reactivity as acceptors for peptidyl transferase. The protein is Elongation factor P of Cupriavidus metallidurans (strain ATCC 43123 / DSM 2839 / NBRC 102507 / CH34) (Ralstonia metallidurans).